The following is a 300-amino-acid chain: 11-beta-hydroxysteroid dehydrogenase 1 (300 aa).

Residues 1–7 (MAFLKKY) lie on the Cytoplasmic side of the membrane. The helical; Signal-anchor for type II membrane protein transmembrane segment at 8-24 (LLTILMVFLAYYYYSAN) threads the bilayer. Residues 25 to 300 (EKFRPEMLQG…SNEKLYGRWA (276 aa)) lie on the Lumenal side of the membrane. NADP(+) is bound by residues 41 to 67 (GASK…TARS), 92 to 93 (SM), and 119 to 123 (NHVLY). Serine 170 provides a ligand contact to substrate. Tyrosine 183 acts as the Proton acceptor in catalysis. Position 183–187 (183–187 (YSASK)) interacts with NADP(+). Asparagine 207 is a glycosylation site (N-linked (GlcNAc...) asparagine). 218–222 (IDTET) serves as a coordination point for NADP(+).

It belongs to the short-chain dehydrogenases/reductases (SDR) family. In terms of assembly, homodimer. Widely expressed in all peripheral tissues, with highest expression in liver, followed by kidney and lung, and very low expression in heart, lung, spleen, stomach, small intestine, colon, skin, skeletal muscle, and ovary.

Its subcellular location is the endoplasmic reticulum membrane. It catalyses the reaction an 11beta-hydroxysteroid + NADP(+) = an 11-oxosteroid + NADPH + H(+). The enzyme catalyses cortisone + NADPH + H(+) = cortisol + NADP(+). The catalysed reaction is corticosterone + NADP(+) = 11-dehydrocorticosterone + NADPH + H(+). It carries out the reaction a 7beta-hydroxysteroid + NADP(+) = a 7-oxosteroid + NADPH + H(+). It catalyses the reaction 7-oxocholesterol + NADPH + H(+) = 7beta-hydroxycholesterol + NADP(+). The enzyme catalyses chenodeoxycholate + NADP(+) = 7-oxolithocholate + NADPH + H(+). The catalysed reaction is 7-oxolithocholate + NADPH + H(+) = ursodeoxycholate + NADP(+). It carries out the reaction glycochenodeoxycholate + NADP(+) = 7-oxoglycolithocholate + NADPH + H(+). It catalyses the reaction taurochenodeoxycholate + NADP(+) = 7-oxotaurolithocholate + NADPH + H(+). The enzyme catalyses tauroursodeoxycholate + NADP(+) = 7-oxotaurolithocholate + NADPH + H(+). The catalysed reaction is glycoursodeoxycholate + NADP(+) = 7-oxoglycolithocholate + NADPH + H(+). It carries out the reaction 7-oxopregnenolone + NADPH + H(+) = 7beta-hydroxypregnenolone + NADP(+). It catalyses the reaction 3beta,7alpha-dihydroxyandrost-5-en-17-one + NADP(+) = 3beta-hydroxy-5-androstene-7,17-dione + NADPH + H(+). The enzyme catalyses 3beta-hydroxy-5-androstene-7,17-dione + NADPH + H(+) = 3beta,7beta-dihydroxyandrost-5-en-17-one + NADP(+). The catalysed reaction is 3beta-hydroxy-5alpha-androstane-7,17-dione + NADPH + H(+) = 3beta,7beta-dihydroxy-5alpha-androstan-17-one + NADP(+). Controls the reversible conversion of biologically active glucocorticoids such as cortisone to cortisol, and 11-dehydrocorticosterone to corticosterone in the presence of NADP(H). Participates in the corticosteroid receptor-mediated anti-inflammatory response, as well as metabolic and homeostatic processes. Bidirectional in vitro, predominantly functions as a reductase in vivo, thereby increasing the concentration of active glucocorticoids. It has broad substrate specificity, besides glucocorticoids, it accepts other steroid and sterol substrates. Interconverts 7-oxo- and 7-hydroxy-neurosteroids such as 7-oxopregnenolone and 7beta-hydroxypregnenolone, 7-oxodehydroepiandrosterone (3beta-hydroxy-5-androstene-7,17-dione) and 7beta-hydroxydehydroepiandrosterone (3beta,7beta-dihydroxyandrost-5-en-17-one), among others. Catalyzes the stereo-specific conversion of the major dietary oxysterol, 7-ketocholesterol (7-oxocholesterol), into the more polar 7-beta-hydroxycholesterol metabolite. 7-oxocholesterol is one of the most important oxysterols, it participates in several events such as induction of apoptosis, accumulation in atherosclerotic lesions, lipid peroxidation, and induction of foam cell formation. Mediates the 7-oxo reduction of 7-oxolithocholate mainly to chenodeoxycholate, and to a lesser extent to ursodeoxycholate, both in its free form and when conjugated to glycine or taurine, providing a link between glucocorticoid activation and bile acid metabolism. Catalyzes the synthesis of 7-beta-25-dihydroxycholesterol from 7-oxo-25-hydroxycholesterol in vitro, which acts as a ligand for the G-protein-coupled receptor (GPCR) Epstein-Barr virus-induced gene 2 (EBI2) and may thereby regulate immune cell migration. The protein is 11-beta-hydroxysteroid dehydrogenase 1 (HSD11B1) of Cavia porcellus (Guinea pig).